Consider the following 579-residue polypeptide: MNHPSLPPQSERRALAIAQAVYEAFEDYHARFSEITACAKQRFETRDWSGAREDAVARIALYDQYIAECMLRLRAVLLGQAHDRALWMRARDRYAALLSGLIDQELYKTFYNTLTRRYFGTHGVDADIEFIALDIEPTDAITVPVARHTYAVSPGRLTDMLVRVLGDYAFAVPYAHRTRCAAAIAVRLLDDLAHWGEHPVRSVELLETVFYRERRAYLVGRVFGEHRFSPCVIALINDDAGLRAEAVLTRRSDVAQLFSNSRSYFQADLSTVGDAVVFLRSLLTHKPVDELYTMLGRAKQGKTERYRTFFSHFQAHPSEQLVHADGTPGMVMVVFTLPSYPLVFKLIRDRFAYPKTMSRAQVEGKYELVFQLDRIGRLLDAQPYRFLRFPKARFSPALLQELQTSCAMSLSEDGDDVLIALCYVQRRLRPLNLYLREQLPEAAHAAALDYGQAIKDMARNNIFPGDMLLKNFGITRHQRAVFYDYDELCLITECNFRDWPTPATYEEQMAAEPWFHVGPRDVFPERFALFMGLPSSQLEAVKHQHPELFDPRWWRDLQSRLRDDDYPDTPPYAESRRLA.

ATP-binding positions include Ala324–Met330 and Lys345. Asp380 is a catalytic residue.

It belongs to the AceK family.

The protein resides in the cytoplasm. It catalyses the reaction L-seryl-[isocitrate dehydrogenase] + ATP = O-phospho-L-seryl-[isocitrate dehydrogenase] + ADP + H(+). Bifunctional enzyme which can phosphorylate or dephosphorylate isocitrate dehydrogenase (IDH) on a specific serine residue. This is a regulatory mechanism which enables bacteria to bypass the Krebs cycle via the glyoxylate shunt in response to the source of carbon. When bacteria are grown on glucose, IDH is fully active and unphosphorylated, but when grown on acetate or ethanol, the activity of IDH declines drastically concomitant with its phosphorylation. In Xanthomonas axonopodis pv. citri (strain 306), this protein is Isocitrate dehydrogenase kinase/phosphatase.